A 242-amino-acid chain; its full sequence is Small ribosomal subunit protein eS6 (242 aa).

Residues 219-229 (EKKSEKAEEKK) show a composition bias toward basic and acidic residues. The tract at residues 219 to 242 (EKKSEKAEEKKRRASSLRTQSVQA) is disordered. Residues Ser-233 and Ser-234 each carry the phosphoserine modification.

The protein belongs to the eukaryotic ribosomal protein eS6 family. In terms of processing, phosphorylated.

The sequence is that of Small ribosomal subunit protein eS6 (RPS6) from Yarrowia lipolytica (strain CLIB 122 / E 150) (Yeast).